The chain runs to 126 residues: Histone H2B type 1-K (126 aa).

Residues 1–12 (MPEPAKSAPAPK) show a composition bias toward low complexity. The disordered stretch occupies residues 1–36 (MPEPAKSAPAPKKGSKKAVTKAQKKDGKKRKRSRKE). Pro2 carries the post-translational modification N-acetylproline. Glu3 carries the post-translational modification ADP-ribosyl glutamic acid. Lys6 is subject to N6-(2-hydroxyisobutyryl)lysine; alternate. Position 6 is an N6-(beta-hydroxybutyryl)lysine; alternate (Lys6). Position 6 is an N6-acetyllysine; alternate (Lys6). Lys6 is subject to N6-butyryllysine; alternate. Residue Lys6 is modified to N6-crotonyllysine; alternate. Lys6 is modified (N6-lactoyllysine; alternate). A Glycyl lysine isopeptide (Lys-Gly) (interchain with G-Cter in SUMO2); alternate cross-link involves residue Lys6. Ser7 carries the ADP-ribosylserine modification. An N6-(beta-hydroxybutyryl)lysine; alternate modification is found at Lys12. Lys12 and Lys13 each carry N6-acetyllysine; alternate. Lys12 and Lys13 each carry N6-crotonyllysine; alternate. Lys12 carries the post-translational modification N6-lactoyllysine; alternate. An N6-(2-hydroxyisobutyryl)lysine; alternate modification is found at Lys13. Ser15 is subject to Phosphoserine; by STK4/MST1. Lys16, Lys17, Lys21, and Lys24 each carry N6-acetyllysine; alternate. Lys16, Lys17, Lys21, and Lys24 each carry N6-crotonyllysine; alternate. N6-lactoyllysine; alternate is present on residues Lys16, Lys17, Lys21, and Lys24. At Lys17 the chain carries N6-glutaryllysine; alternate. An N6-(2-hydroxyisobutyryl)lysine; alternate mark is found at Lys21 and Lys24. An N6-(beta-hydroxybutyryl)lysine; alternate modification is found at Lys21. Lys21 is subject to N6-butyryllysine; alternate. Lys21 participates in a covalent cross-link: Glycyl lysine isopeptide (Lys-Gly) (interchain with G-Cter in SUMO2); alternate. N6-(2-hydroxyisobutyryl)lysine is present on Lys25. Position 35 is an N6-(2-hydroxyisobutyryl)lysine; alternate (Lys35). Residue Lys35 is modified to N6-(beta-hydroxybutyryl)lysine; alternate. Lys35 is subject to N6-crotonyllysine; alternate. Residue Lys35 is modified to N6-glutaryllysine; alternate. Lys35 is subject to N6-succinyllysine; alternate. Lys35 is covalently cross-linked (Glycyl lysine isopeptide (Lys-Gly) (interchain with G-Cter in ubiquitin); alternate). Glu36 carries the polyADP-ribosyl glutamic acid modification. Ser37 carries the post-translational modification Phosphoserine; by AMPK. N6-(2-hydroxyisobutyryl)lysine; alternate occurs at positions 44, 47, and 58. The residue at position 44 (Lys44) is an N6-lactoyllysine; alternate. Residues Lys44 and Lys47 each carry the N6-glutaryllysine; alternate modification. Lys47 is subject to N6-methyllysine; alternate. The residue at position 58 (Lys58) is an N6,N6-dimethyllysine; alternate. A Dimethylated arginine modification is found at Arg80. The residue at position 86 (Lys86) is an N6-(2-hydroxyisobutyryl)lysine; alternate. Position 86 is an N6-acetyllysine; alternate (Lys86). An N6-lactoyllysine; alternate modification is found at Lys86. At Lys86 the chain carries N6,N6,N6-trimethyllysine; alternate. Omega-N-methylarginine occurs at positions 87 and 93. Lys109 bears the N6-(2-hydroxyisobutyryl)lysine; alternate mark. Lys109 is subject to N6-lactoyllysine; alternate. Lys109 carries the N6-glutaryllysine; alternate modification. Residue Lys109 is modified to N6-methyllysine; alternate. O-linked (GlcNAc) serine glycosylation is present at Ser113. The residue at position 116 (Thr116) is a Phosphothreonine. N6-(2-hydroxyisobutyryl)lysine; alternate is present on residues Lys117 and Lys121. The residue at position 117 (Lys117) is an N6-(beta-hydroxybutyryl)lysine; alternate. N6-lactoyllysine; alternate occurs at positions 117 and 121. Lys117 and Lys121 each carry N6-glutaryllysine; alternate. Residues Lys117 and Lys121 each carry the N6-succinyllysine; alternate modification. Residue Lys117 is modified to N6-methylated lysine; alternate. Lys121 is covalently cross-linked (Glycyl lysine isopeptide (Lys-Gly) (interchain with G-Cter in ubiquitin); alternate).

It belongs to the histone H2B family. The nucleosome is a histone octamer containing two molecules each of H2A, H2B, H3 and H4 assembled in one H3-H4 heterotetramer and two H2A-H2B heterodimers. The octamer wraps approximately 147 bp of DNA. Monoubiquitination at Lys-35 (H2BK34Ub) by the MSL1/MSL2 dimer is required for histone H3 'Lys-4' (H3K4me) and 'Lys-79' (H3K79me) methylation and transcription activation at specific gene loci, such as HOXA9 and MEIS1 loci. Similarly, monoubiquitination at Lys-121 (H2BK120Ub) by the RNF20/40 complex gives a specific tag for epigenetic transcriptional activation and is also prerequisite for histone H3 'Lys-4' and 'Lys-79' methylation. It also functions cooperatively with the FACT dimer to stimulate elongation by RNA polymerase II. H2BK120Ub also acts as a regulator of mRNA splicing: deubiquitination by USP49 is required for efficient cotranscriptional splicing of a large set of exons. In terms of processing, phosphorylated on Ser-15 (H2BS14ph) by STK4/MST1 during apoptosis; which facilitates apoptotic chromatin condensation. Also phosphorylated on Ser-15 in response to DNA double strand breaks (DSBs), and in correlation with somatic hypermutation and immunoglobulin class-switch recombination. Phosphorylation at Ser-37 (H2BS36ph) by AMPK in response to stress promotes transcription. Post-translationally, glcNAcylation at Ser-113 promotes monoubiquitination of Lys-121. It fluctuates in response to extracellular glucose, and associates with transcribed genes. ADP-ribosylated by PARP1 or PARP2 on Ser-7 (H2BS6ADPr) in response to DNA damage. H2BS6ADPr promotes recruitment of CHD1L. Mono-ADP-ribosylated on Glu-3 (H2BE2ADPr) by PARP3 in response to single-strand breaks. Poly ADP-ribosylation on Glu-36 (H2BE35ADPr) by PARP1 regulates adipogenesis: it inhibits phosphorylation at Ser-37 (H2BS36ph), thereby blocking expression of pro-adipogenetic genes. In terms of processing, crotonylation (Kcr) is specifically present in male germ cells and marks testis-specific genes in post-meiotic cells, including X-linked genes that escape sex chromosome inactivation in haploid cells. Crotonylation marks active promoters and enhancers and confers resistance to transcriptional repressors. It is also associated with post-meiotically activated genes on autosomes. Post-translationally, lactylated in macrophages by EP300/P300 by using lactoyl-CoA directly derived from endogenous or exogenous lactate, leading to stimulates gene transcription.

It localises to the nucleus. The protein localises to the chromosome. Core component of nucleosome. Nucleosomes wrap and compact DNA into chromatin, limiting DNA accessibility to the cellular machineries which require DNA as a template. Histones thereby play a central role in transcription regulation, DNA repair, DNA replication and chromosomal stability. DNA accessibility is regulated via a complex set of post-translational modifications of histones, also called histone code, and nucleosome remodeling. The sequence is that of Histone H2B type 1-K from Macaca fascicularis (Crab-eating macaque).